Reading from the N-terminus, the 396-residue chain is MSVRLVLAKGREKSLLRRHPWVFSGTVARMEGKASLGETIDIVDHQGKWLARGAYSPASQIRARVWTFDPSESIDIAFFSRRLQQAQKWRDWLAQKDGLDSYRLIAGESDGLPGITIDRFGNFLVLQLLSAGAEYQRAALVSALQTLYPECAIYDRSDVAVRKKEGMELTLGLVTGELPPALLPIEEHGMKLLVDIQHGHKTGYYLDQRDSRLATRRYVENKRVLNCFSYTGGFAVSALMGGCSQVVSVDTSQEALDIARQNVELNKLDLSKAEFVRDDVFKLLRTYRDRGEKFDVIVMDPPKFVENKSQLMGACRGYKDINMLAIQLLNEGGILLTFSCSGLMTSDLFQKIIADAAIDAGRDVQFIEQFRQAADHPVIATYPEGLYLKGFACRVM.

Residues S2–R81 form the PUA domain.

The protein belongs to the methyltransferase superfamily. RlmI family.

The protein resides in the cytoplasm. The enzyme catalyses cytidine(1962) in 23S rRNA + S-adenosyl-L-methionine = 5-methylcytidine(1962) in 23S rRNA + S-adenosyl-L-homocysteine + H(+). Specifically methylates the cytosine at position 1962 (m5C1962) of 23S rRNA. This chain is Ribosomal RNA large subunit methyltransferase I, found in Shigella boydii serotype 18 (strain CDC 3083-94 / BS512).